We begin with the raw amino-acid sequence, 170 residues long: Adenine phosphoribosyltransferase (170 aa).

The protein belongs to the purine/pyrimidine phosphoribosyltransferase family. Homodimer.

The protein localises to the cytoplasm. It catalyses the reaction AMP + diphosphate = 5-phospho-alpha-D-ribose 1-diphosphate + adenine. It functions in the pathway purine metabolism; AMP biosynthesis via salvage pathway; AMP from adenine: step 1/1. Functionally, catalyzes a salvage reaction resulting in the formation of AMP, that is energically less costly than de novo synthesis. The chain is Adenine phosphoribosyltransferase from Bacillus subtilis (strain 168).